The sequence spans 556 residues: MANGLFTYVAISLFTIGPLLALFIPFVWRLVGSSLGWYLRRKTDGRRCHILEVVEADERKYRDSKSAKGRKAEKEDRDTFNNTEATGTSDGKVYDKDWDGIVGFFHPFCNAGGGGERVLWAAIRATQKRWPKAKCVVYTGDHDVSKEAILSRVEQRFNIHLHPPTVNFLYLSTRRWVLASTWPYFTLAGQSFGSLIMAWDAFSLLVPDIFVDTMGYAFALGFSRFLFRDVPTAAYVHYPTISTDMLESLDPASAVGSQGVNAGKGTGAKGRAKKIYWQLFARLYSLMGASVDVVMTNSTWTQAHIEKLWGPVRNLTGAVPGIKSKVNPIAVVYPPVAVEELEQEVEVSPESEKRRENVLLYIAQFRPEKNHQLIVQAFAEFLKSGSEAARDAKLVLVGSVRDDYDSKRVYKLRLLVNELHIKDRVEFHLDASWPDILEWLRRASVGVNGMWNEHFGIGVVEYQAAGLISVVHDSGGPKLDIVVEVDGEPTGFHATTSKEFAEGFEKALSLPNPYAVRLRARKSAKRFTEEEFARRWIEQLEKCVAIKAVEKPKSRQ.

At 1–7 (MANGLFT) the chain is on the lumenal side. Residues 8 to 28 (YVAISLFTIGPLLALFIPFVW) form a helical membrane-spanning segment. Residues 29–184 (RLVGSSLGWY…RWVLASTWPY (156 aa)) lie on the Cytoplasmic side of the membrane. Basic and acidic residues predominate over residues 64–79 (SKSAKGRKAEKEDRDT). Residues 64–86 (SKSAKGRKAEKEDRDTFNNTEAT) are disordered. The helical intramembrane region spans 185-205 (FTLAGQSFGSLIMAWDAFSLL). The Cytoplasmic segment spans residues 206 to 454 (VPDIFVDTMG…VGVNGMWNEH (249 aa)). The helical intramembrane region spans 455–475 (FGIGVVEYQAAGLISVVHDSG). The Cytoplasmic segment spans residues 476–556 (GPKLDIVVEV…KAVEKPKSRQ (81 aa)).

This sequence belongs to the glycosyltransferase group 1 family. Glycosyltransferase 4 subfamily.

The protein localises to the endoplasmic reticulum membrane. It catalyses the reaction an alpha-D-Man-(1-&gt;3)-[alpha-D-Man-(1-&gt;6)]-beta-D-Man-(1-&gt;4)-beta-D-GlcNAc-(1-&gt;4)-alpha-D-GlcNAc-diphospho-di-trans,poly-cis-dolichol + 2 GDP-alpha-D-mannose = an alpha-D-Man-(1-&gt;2)-alpha-D-Man-(1-&gt;2)-alpha-D-Man-(1-&gt;3)-[alpha-D-Man-(1-&gt;6)]-beta-D-Man-(1-&gt;4)-beta-D-GlcNAc-(1-&gt;4)-alpha-D-GlcNAc-diphospho-di-trans,poly-cis-dolichol + 2 GDP + 2 H(+). Its pathway is protein modification; protein glycosylation. In terms of biological role, GDP-Man:Man(3)GlcNAc(2)-PP-Dol alpha-1,2-mannosyltransferase that operates in the biosynthetic pathway of dolichol-linked oligosaccharides, the glycan precursors employed in protein asparagine (N)-glycosylation. The assembly of dolichol-linked oligosaccharides begins on the cytosolic side of the endoplasmic reticulum membrane and finishes in its lumen. The sequential addition of sugars to dolichol pyrophosphate produces dolichol-linked oligosaccharides containing fourteen sugars, including two GlcNAcs, nine mannoses and three glucoses. Once assembled, the oligosaccharide is transferred from the lipid to nascent proteins by oligosaccharyltransferases. Catalyzes, on the cytoplasmic face of the endoplasmic reticulum, the addition of the fourth and fifth mannose residues to the dolichol-linked oligosaccharide chain, to produce Man(5)GlcNAc(2)-PP-dolichol core oligosaccharide. This is GDP-Man:Man(3)GlcNAc(2)-PP-Dol alpha-1,2-mannosyltransferase (alg-11) from Neurospora crassa (strain ATCC 24698 / 74-OR23-1A / CBS 708.71 / DSM 1257 / FGSC 987).